Consider the following 90-residue polypeptide: Probable Fe(2+)-trafficking protein (90 aa).

It belongs to the Fe(2+)-trafficking protein family.

Functionally, could be a mediator in iron transactions between iron acquisition and iron-requiring processes, such as synthesis and/or repair of Fe-S clusters in biosynthetic enzymes. This Ectopseudomonas mendocina (strain ymp) (Pseudomonas mendocina) protein is Probable Fe(2+)-trafficking protein.